The sequence spans 320 residues: Retron Ec86 reverse transcriptase (320 aa).

A Reverse transcriptase domain is found at 34-248 (VETLRLLIYT…SQRKVTGLVI (215 aa)). Mg(2+) is bound by residues Asp-119, Asp-197, and Asp-198. Residues 230 to 320 (KKTCISGPRS…GKNPLNKAKT (91 aa)) are necessary and required for recognition and binding of RNA.

The protein belongs to the bacterial reverse transcriptase family.

It catalyses the reaction DNA(n) + a 2'-deoxyribonucleoside 5'-triphosphate = DNA(n+1) + diphosphate. Its function is as follows. Reverse transcriptase (RT) component of antiviral defense system retron Ec86, composed of a non-coding RNA (ncRNA), a ribosyltransferase/DNA-binding protein and this RT. Expression of the 3-gene retron confers protection against bacteriophage T5. At multiplicity of infection (MOI) of 0.02 cultures grow normally when infected with T5 without collapsing, at MOI 2 cultures enter growth stasis. Responsible for synthesis of msDNA (a branched molecule with RNA linked by a 2',5'-phosphodiester bond to ssDNA). The retron transcript serves as primer (from a conserved internal G residue) and template for the reaction, and codes for the RT. Recognizes only its cognate RNA as a primer template. Overexpression of the ncRNA and RT (without the ribosyltransferase), which leads to increased levels of msDNA, is mutagenic in vivo. This may be due to a mismatch in the msDNA stem which binds and sequesters MutS and/or MutL. The chain is Retron Ec86 reverse transcriptase from Escherichia coli.